The chain runs to 372 residues: Queuine tRNA-ribosyltransferase (372 aa).

The Proton acceptor role is filled by Asp-89. Substrate is bound by residues 89 to 93 (DSGGF), Asp-161, and Gly-232. The segment at 262-268 (GIGDLPS) is RNA binding. Asp-281 (nucleophile) is an active-site residue. The tract at residues 286–290 (TKAAR) is RNA binding; important for wobble base 34 recognition. Zn(2+) contacts are provided by Cys-319, Cys-321, Cys-324, and His-351.

Belongs to the queuine tRNA-ribosyltransferase family. In terms of assembly, homodimer. Within each dimer, one monomer is responsible for RNA recognition and catalysis, while the other monomer binds to the replacement base PreQ1. Requires Zn(2+) as cofactor.

It carries out the reaction 7-aminomethyl-7-carbaguanine + guanosine(34) in tRNA = 7-aminomethyl-7-carbaguanosine(34) in tRNA + guanine. The protein operates within tRNA modification; tRNA-queuosine biosynthesis. Functionally, catalyzes the base-exchange of a guanine (G) residue with the queuine precursor 7-aminomethyl-7-deazaguanine (PreQ1) at position 34 (anticodon wobble position) in tRNAs with GU(N) anticodons (tRNA-Asp, -Asn, -His and -Tyr). Catalysis occurs through a double-displacement mechanism. The nucleophile active site attacks the C1' of nucleotide 34 to detach the guanine base from the RNA, forming a covalent enzyme-RNA intermediate. The proton acceptor active site deprotonates the incoming PreQ1, allowing a nucleophilic attack on the C1' of the ribose to form the product. After dissociation, two additional enzymatic reactions on the tRNA convert PreQ1 to queuine (Q), resulting in the hypermodified nucleoside queuosine (7-(((4,5-cis-dihydroxy-2-cyclopenten-1-yl)amino)methyl)-7-deazaguanosine). The protein is Queuine tRNA-ribosyltransferase of Chlamydia abortus (strain DSM 27085 / S26/3) (Chlamydophila abortus).